Consider the following 287-residue polypeptide: Histone H1 (287 aa).

Residues M1–E11 show a composition bias toward low complexity. 2 disordered regions span residues M1–P58 and Y120–K287. Residues G33–S51 show a composition bias toward basic residues. Residues T55–S124 form the H15 domain. The segment covering A135–P202 has biased composition (basic residues). Positions K203–T248 are enriched in low complexity. Basic residues predominate over residues P276 to K287.

This sequence belongs to the histone H1/H5 family.

The protein localises to the nucleus. Its subcellular location is the chromosome. In terms of biological role, histones H1 are necessary for the condensation of nucleosome chains into higher-order structures. The polypeptide is Histone H1 (Solanum lycopersicum (Tomato)).